A 364-amino-acid polypeptide reads, in one-letter code: Salivary endonuclease (364 aa).

The N-terminal stretch at 1 to 24 (MSSFFLSISPLVLALFHVVVQVCS) is a signal peptide. A glycan (N-linked (GlcNAc...) asparagine) is linked at Asn285.

This sequence belongs to the DNA/RNA non-specific endonuclease family. Mg(2+) is required as a cofactor. As to expression, saliva (at protein level). Female salivary gland.

It is found in the secreted. Functionally, hydrolyzes double-stranded DNA with no sequence specificity. Does not cleave ssDNA and RNA. May facilitate blood meal intake by lowering the local viscosity created by the release of host DNA. The polypeptide is Salivary endonuclease (Culex quinquefasciatus (Southern house mosquito)).